A 341-amino-acid chain; its full sequence is Anthranilate phosphoribosyltransferase (341 aa).

5-phospho-alpha-D-ribose 1-diphosphate-binding positions include G79, 82–83, T87, 89–92, 107–115, and S119; these read GD, NIST, and KHGNRAVSS. G79 is an anthranilate binding site. S91 serves as a coordination point for Mg(2+). Residue N110 coordinates anthranilate. R165 lines the anthranilate pocket. Residues D224 and E225 each contribute to the Mg(2+) site.

The protein belongs to the anthranilate phosphoribosyltransferase family. In terms of assembly, homodimer. Requires Mg(2+) as cofactor.

It catalyses the reaction N-(5-phospho-beta-D-ribosyl)anthranilate + diphosphate = 5-phospho-alpha-D-ribose 1-diphosphate + anthranilate. The protein operates within amino-acid biosynthesis; L-tryptophan biosynthesis; L-tryptophan from chorismate: step 2/5. Catalyzes the transfer of the phosphoribosyl group of 5-phosphorylribose-1-pyrophosphate (PRPP) to anthranilate to yield N-(5'-phosphoribosyl)-anthranilate (PRA). The protein is Anthranilate phosphoribosyltransferase of Bacillus thuringiensis subsp. konkukian (strain 97-27).